The following is a 189-amino-acid chain: Protein GrpE (189 aa).

The segment covering methionine 1–threonine 14 has biased composition (basic and acidic residues). The tract at residues methionine 1 to alanine 23 is disordered.

This sequence belongs to the GrpE family. In terms of assembly, homodimer.

It is found in the cytoplasm. Functionally, participates actively in the response to hyperosmotic and heat shock by preventing the aggregation of stress-denatured proteins, in association with DnaK and GrpE. It is the nucleotide exchange factor for DnaK and may function as a thermosensor. Unfolded proteins bind initially to DnaJ; upon interaction with the DnaJ-bound protein, DnaK hydrolyzes its bound ATP, resulting in the formation of a stable complex. GrpE releases ADP from DnaK; ATP binding to DnaK triggers the release of the substrate protein, thus completing the reaction cycle. Several rounds of ATP-dependent interactions between DnaJ, DnaK and GrpE are required for fully efficient folding. In Lawsonia intracellularis (strain PHE/MN1-00), this protein is Protein GrpE.